A 246-amino-acid chain; its full sequence is 3'(2'),5'-bisphosphate nucleotidase CysQ (246 aa).

Glu64, Asp83, Leu85, Asp86, and Asp205 together coordinate Mg(2+). Glu64 contributes to the substrate binding site. Substrate is bound by residues 85–88 and Asp205; that span reads LDGT.

Belongs to the inositol monophosphatase superfamily. CysQ family. Mg(2+) is required as a cofactor.

It localises to the cell inner membrane. It carries out the reaction adenosine 3',5'-bisphosphate + H2O = AMP + phosphate. Inhibited by lithium and calcium. In terms of biological role, converts adenosine-3',5'-bisphosphate (PAP) to AMP. May also convert adenosine 3'-phosphate 5'-phosphosulfate (PAPS) to adenosine 5'-phosphosulfate (APS). Has 10000-fold lower activity towards inositol 1,4-bisphosphate (Ins(1,4)P2). The sequence is that of 3'(2'),5'-bisphosphate nucleotidase CysQ from Escherichia coli (strain K12).